The sequence spans 136 residues: Ribosome-binding factor A (136 aa).

The tract at residues 116–136 is disordered; sequence AGNHKASDEEESDDKGHEDEQ.

The protein belongs to the RbfA family. In terms of assembly, monomer. Binds 30S ribosomal subunits, but not 50S ribosomal subunits or 70S ribosomes.

It localises to the cytoplasm. Functionally, one of several proteins that assist in the late maturation steps of the functional core of the 30S ribosomal subunit. Associates with free 30S ribosomal subunits (but not with 30S subunits that are part of 70S ribosomes or polysomes). Required for efficient processing of 16S rRNA. May interact with the 5'-terminal helix region of 16S rRNA. This is Ribosome-binding factor A from Lachnoclostridium phytofermentans (strain ATCC 700394 / DSM 18823 / ISDg) (Clostridium phytofermentans).